Reading from the N-terminus, the 422-residue chain is 26S proteasome non-ATPase regulatory subunit 11 (422 aa).

A2 carries the post-translational modification N-acetylalanine. Phosphoserine is present on residues S14 and S23. One can recognise a PCI domain in the interval 224–392 (DWKTAYSYFY…GVLIIFDEPP (169 aa)). K274 participates in a covalent cross-link: Glycyl lysine isopeptide (Lys-Gly) (interchain with G-Cter in SUMO2).

Belongs to the proteasome subunit S9 family. In terms of assembly, component of the 19S proteasome regulatory particle complex. The 26S proteasome consists of a 20S core particle (CP) and two 19S regulatory subunits (RP). The regulatory particle is made of a lid composed of 9 subunits including PSMD11, a base containing 6 ATPases and few additional components. Post-translationally, phosphorylated by AMPK.

It is found in the nucleus. The protein resides in the cytoplasm. It localises to the cytosol. Its function is as follows. Component of the 26S proteasome, a multiprotein complex involved in the ATP-dependent degradation of ubiquitinated proteins. This complex plays a key role in the maintenance of protein homeostasis by removing misfolded or damaged proteins, which could impair cellular functions, and by removing proteins whose functions are no longer required. Therefore, the proteasome participates in numerous cellular processes, including cell cycle progression, apoptosis, or DNA damage repair. In the complex, PSMD11 is required for proteasome assembly. Plays a key role in increased proteasome activity in embryonic stem cells (ESCs): its high expression in ESCs promotes enhanced assembly of the 26S proteasome, followed by higher proteasome activity. The chain is 26S proteasome non-ATPase regulatory subunit 11 (PSMD11) from Bos taurus (Bovine).